The following is a 442-amino-acid chain: Cytochrome c biogenesis protein CcsB (442 aa).

3 helical membrane passes run 17 to 37 (LRLA…GTVI), 76 to 96 (TPWY…CTLT), and 162 to 182 (LGPI…ILGA).

This sequence belongs to the Ccs1/CcsB family. As to quaternary structure, may interact with CcsA.

Its subcellular location is the cellular thylakoid membrane. Required during biogenesis of c-type cytochromes (cytochrome c6 and cytochrome f) at the step of heme attachment. This chain is Cytochrome c biogenesis protein CcsB, found in Thermosynechococcus vestitus (strain NIES-2133 / IAM M-273 / BP-1).